The following is an 815-amino-acid chain: Plakophilin-2 (815 aa).

The segment covering 1 to 12 (MLKPHPEHKEQP) has biased composition (basic and acidic residues). Disordered regions lie at residues 1–31 (MLKP…MAEE) and 76–105 (QLTL…ISSS). Positions 13 to 25 (QDSFTPSGDSTPD) are enriched in polar residues. Low complexity predominate over residues 91–105 (SSLAESQSSCQISSS). ARM repeat units follow at residues 317 to 357 (KGKP…NQCF), 360 to 399 (PDAK…NIVF), 402 to 442 (NENK…NLSS), 457 to 498 (PLTD…NLSS), 501 to 547 (PDGR…NLSY), 604 to 644 (PHGV…NLTA), 652 to 691 (AIAH…NISR), 693 to 737 (RELH…NLSQ), and 740 to 783 (ASNT…TLWR).

This sequence belongs to the beta-catenin family.

Its subcellular location is the nucleus. It localises to the cell junction. The protein localises to the desmosome. The protein resides in the cytoplasm. In terms of biological role, required for development of the heart, potentially via cell-cell adhesion and modulation of expression of cardiac precursor genes. Plays a role in desmosome cell-cell junctions and their intracellular connectivity. This Danio rerio (Zebrafish) protein is Plakophilin-2.